We begin with the raw amino-acid sequence, 151 residues long: Ribosome maturation factor RimP (151 aa).

This sequence belongs to the RimP family.

The protein resides in the cytoplasm. Its function is as follows. Required for maturation of 30S ribosomal subunits. The protein is Ribosome maturation factor RimP of Haemophilus influenzae (strain PittGG).